The following is a 492-amino-acid chain: Catalase isozyme 3 (492 aa).

Active-site residues include His-65 and Asn-138. Tyr-347 contributes to the heme binding site.

The protein belongs to the catalase family. In terms of assembly, homotetramer. Heme is required as a cofactor. Abundant in green cotyledons, etiolated cotyledons, green hypocotyl and root, but not in young leaf.

Its subcellular location is the peroxisome. The catalysed reaction is 2 H2O2 = O2 + 2 H2O. In terms of biological role, occurs in almost all aerobically respiring organisms and serves to protect cells from the toxic effects of hydrogen peroxide. The sequence is that of Catalase isozyme 3 (CAT3) from Cucurbita pepo (Vegetable marrow).